Consider the following 271-residue polypeptide: Eukaryotic translation initiation factor 3 subunit G (271 aa).

Disordered stretches follow at residues 1–29 (MPAL…SEVI) and 143–185 (KPTK…MRGR). In terms of domain architecture, RRM spans 189–267 (SAIRISNLSE…LILSVEWSKP (79 aa)).

Belongs to the eIF-3 subunit G family. In terms of assembly, component of the eukaryotic translation initiation factor 3 (eIF-3) complex.

The protein resides in the cytoplasm. Functionally, RNA-binding component of the eukaryotic translation initiation factor 3 (eIF-3) complex, which is involved in protein synthesis of a specialized repertoire of mRNAs and, together with other initiation factors, stimulates binding of mRNA and methionyl-tRNAi to the 40S ribosome. The eIF-3 complex specifically targets and initiates translation of a subset of mRNAs involved in cell proliferation. This subunit can bind 18S rRNA. This is Eukaryotic translation initiation factor 3 subunit G from Anopheles gambiae (African malaria mosquito).